The following is a 169-amino-acid chain: Ribosome maturation factor RimM (169 aa).

The 75-residue stretch at 94–168 (DDEFYHADLI…RIVADPPEGL (75 aa)) folds into the PRC barrel domain.

This sequence belongs to the RimM family. In terms of assembly, binds ribosomal protein uS19.

The protein localises to the cytoplasm. Its function is as follows. An accessory protein needed during the final step in the assembly of 30S ribosomal subunit, possibly for assembly of the head region. Essential for efficient processing of 16S rRNA. May be needed both before and after RbfA during the maturation of 16S rRNA. It has affinity for free ribosomal 30S subunits but not for 70S ribosomes. This is Ribosome maturation factor RimM from Cereibacter sphaeroides (strain ATCC 17029 / ATH 2.4.9) (Rhodobacter sphaeroides).